The sequence spans 123 residues: Large ribosomal subunit protein bL12 (123 aa).

This sequence belongs to the bacterial ribosomal protein bL12 family. In terms of assembly, homodimer. Part of the ribosomal stalk of the 50S ribosomal subunit. Forms a multimeric L10(L12)X complex, where L10 forms an elongated spine to which 2 to 4 L12 dimers bind in a sequential fashion. Binds GTP-bound translation factors.

In terms of biological role, forms part of the ribosomal stalk which helps the ribosome interact with GTP-bound translation factors. Is thus essential for accurate translation. This is Large ribosomal subunit protein bL12 from Metamycoplasma arthritidis (strain 158L3-1) (Mycoplasma arthritidis).